The sequence spans 89 residues: Rho beta-crystallin (89 aa).

Histidine 31 serves as a coordination point for substrate.

This sequence belongs to the aldo/keto reductase family. As to quaternary structure, monomer.

The chain is Rho beta-crystallin from Lepidodactylus lugubris (Mourning gecko).